The primary structure comprises 351 residues: NAD-dependent protein deacetylase SIR2rp1 (351 aa).

The 316-residue stretch at 10–325 (HVVGEPTFEG…RSFAQALGFG (316 aa)) folds into the Deacetylase sirtuin-type domain. NAD(+)-binding positions include 37–57 (GAGI…TGLY) and 122–125 (QNID). The Proton acceptor role is filled by His142. Zn(2+) contacts are provided by Cys150, Cys153, Cys174, and Cys177. NAD(+) is bound by residues 213–215 (GTS) and 238–240 (NLE). Positions 260-284 (SSYRLSTGNGNGSKISSGDSSNSSS) are disordered. The segment covering 265–284 (STGNGNGSKISSGDSSNSSS) has biased composition (low complexity). Cys311 serves as a coordination point for NAD(+).

It belongs to the sirtuin family. Class I subfamily. It depends on Zn(2+) as a cofactor.

It localises to the nucleus. The protein localises to the chromosome. The protein resides in the telomere. It catalyses the reaction N(6)-acetyl-L-lysyl-[protein] + NAD(+) + H2O = 2''-O-acetyl-ADP-D-ribose + nicotinamide + L-lysyl-[protein]. Its function is as follows. NAD-dependent protein deacetylase, which is involved in repression of RNA polymerase I-mediated expression immediately adjacent to telomeres. It is however not involved in antigenic variation and subtelomeric variant surface glycoprotein (VSG) gene silencing. Plays a role in DNA damage response. Also has ADP-ribosylation activity in vitro. The chain is NAD-dependent protein deacetylase SIR2rp1 (SIR2rp1) from Trypanosoma brucei brucei (strain 927/4 GUTat10.1).